The following is a 139-amino-acid chain: Transcription antitermination protein NusB (139 aa).

The protein belongs to the NusB family.

Functionally, involved in transcription antitermination. Required for transcription of ribosomal RNA (rRNA) genes. Binds specifically to the boxA antiterminator sequence of the ribosomal RNA (rrn) operons. This chain is Transcription antitermination protein NusB, found in Limosilactobacillus fermentum (strain NBRC 3956 / LMG 18251) (Lactobacillus fermentum).